We begin with the raw amino-acid sequence, 332 residues long: Phosphatidylglycerol--prolipoprotein diacylglyceryl transferase (332 aa).

Helical transmembrane passes span 18 to 38 (FPYF…AYIL), 66 to 86 (FFTW…TMVY), and 111 to 131 (VGLR…GGGL). Arg159 provides a ligand contact to a 1,2-diacyl-sn-glycero-3-phospho-(1'-sn-glycerol). Transmembrane regions (helical) follow at residues 249 to 269 (GFLV…IEYF) and 302 to 322 (ILCV…SAYH).

The protein belongs to the Lgt family.

It is found in the cell inner membrane. It carries out the reaction L-cysteinyl-[prolipoprotein] + a 1,2-diacyl-sn-glycero-3-phospho-(1'-sn-glycerol) = an S-1,2-diacyl-sn-glyceryl-L-cysteinyl-[prolipoprotein] + sn-glycerol 1-phosphate + H(+). It functions in the pathway protein modification; lipoprotein biosynthesis (diacylglyceryl transfer). Functionally, catalyzes the transfer of the diacylglyceryl group from phosphatidylglycerol to the sulfhydryl group of the N-terminal cysteine of a prolipoprotein, the first step in the formation of mature lipoproteins. This chain is Phosphatidylglycerol--prolipoprotein diacylglyceryl transferase, found in Treponema pallidum (strain Nichols).